Consider the following 603-residue polypeptide: MRQSYRYASGAVVRRTLKGLRKLILCQDLRQDIRHLVRSYADMNISLPVSAPPGWRLDFVEFEDIFGSAAVTDGPETPWGQLICCEESLESLGVLQFSTTVLPRVHGPRSSSEDEDSDDDDFFVYVEEIEPPSQARLVLLLGRYETVWCLDRDCGVLYYLAHSLDDFARHGLLHCEAIYGEQMRTPLLTTQPDHIICDLRLHDNSISELQRVTCRYRGECVPLRTPGEMTRPLLLCGQAENLKGVWPFICMETEQFNDLLKFFVDRLCCETMIMGVVGESLPSGVFHADFVILVDRACEFFYFDVSRREIWRLADSVDMLLTVGLLKIYQAGRRFHYAVDDAERLEVPGRCPHENFPFWDRFGTVERVRASTRHHELRYKWLIRKDRFIVRPDWCSMRNSLDEVSGTADVSWDPRIRPDYPQTSDLECAKQYWQELNDHVREQTARYGPVRRYSVWCGMSSRLERAVKRLQQRIPRQNLMNPSLMNQGLCVYYSDEEEDQEEDDTSDDDDQEKETENPQNNIGSLTRTPSSPGSLEGVEERMLNVMKEAVAEQDRKKTQKKHKIDTAQRRVLTRRAARAAVLEGRPTPKPTMPHPVSYLPFWM.

Positions 496–513 (EEEDQEEDDTSDDDDQEK) are enriched in acidic residues. Disordered regions lie at residues 496–536 (EEED…GSLE) and 549–568 (AVAEQDRKKTQKKHKIDTAQ). A compositionally biased stretch (polar residues) spans 517 to 533 (NPQNNIGSLTRTPSSPG).

The protein belongs to the herpesviridae US22 family.

The sequence is that of Protein US26 (US26) from Human cytomegalovirus (strain Merlin) (HHV-5).